The primary structure comprises 856 residues: 3-hydroxy-3-methylglutaryl-coenzyme A reductase (856 aa).

4 helical membrane passes run 12–32 (FCASHPWEVIVATLTLTVCML), 89–109 (ILGIAGLFTVFSSFVFSSSVI), 123–143 (LFFFLLLIDLSKATVLAQFAL), and 190–210 (VLCCFACMSVIVNYVVFMTFY). A glycan (N-linked (GlcNAc...) asparagine) is linked at asparagine 326. The chain crosses the membrane as a helical span at residues 344 to 364 (SADHIVILILLLALAVKFVFF). Positions 365–443 (ETRDELTTTR…CEVMALVTSG (79 aa)) are linker. Asparagine 412 carries N-linked (GlcNAc...) asparagine glycosylation. Residues 443 to 771 (GHIAGYQLEK…SCTMPSIEIG (329 aa)) form a catalytic region. Active-site charge relay system residues include glutamate 528 and lysine 659. Asparagine 700 carries an N-linked (GlcNAc...) asparagine glycan. Aspartate 735 functions as the Charge relay system in the catalytic mechanism. The Proton donor role is filled by histidine 834. The interval 836-856 (RHNRSSVSTSGSEPSTPACKS) is disordered. N-linked (GlcNAc...) asparagine glycosylation occurs at asparagine 838. A compositionally biased stretch (low complexity) spans 840 to 856 (SSVSTSGSEPSTPACKS).

It belongs to the HMG-CoA reductase family.

The protein localises to the endoplasmic reticulum membrane. The catalysed reaction is (R)-mevalonate + 2 NADP(+) + CoA = (3S)-3-hydroxy-3-methylglutaryl-CoA + 2 NADPH + 2 H(+). The protein operates within metabolic intermediate biosynthesis; (R)-mevalonate biosynthesis; (R)-mevalonate from acetyl-CoA: step 3/3. The activity of HMG-CoA-reductase is suppressed by exogenous mevalonate. Its function is as follows. Synthesis of mevalonate for the production of non-sterol isoprenoids, which are essential for growth differentiation. The protein is 3-hydroxy-3-methylglutaryl-coenzyme A reductase of Blattella germanica (German cockroach).